We begin with the raw amino-acid sequence, 106 residues long: Large ribosomal subunit protein bL21c (106 aa).

Belongs to the bacterial ribosomal protein bL21 family. In terms of assembly, part of the 50S ribosomal subunit.

Its subcellular location is the plastid. The protein localises to the chloroplast. Functionally, this protein binds to 23S rRNA. The protein is Large ribosomal subunit protein bL21c of Gracilaria tenuistipitata var. liui (Red alga).